A 444-amino-acid chain; its full sequence is Type VI secretion system baseplate component TssK1 (444 aa).

Forms transient higher-order structures that correlated with dynamics of sheath component TssB1. Interacts with TssA1.

Its function is as follows. Core component of the H1 type VI (H1-T6SS) secretion system that plays a role in the release of toxins targeting both eukaryotic and prokaryotic species. Functions as a spatio-temporal marker for assembly of contractile apparatus made of TssB1 and TssC1. This role in assembly depends on TssM1. This chain is Type VI secretion system baseplate component TssK1, found in Pseudomonas aeruginosa (strain ATCC 15692 / DSM 22644 / CIP 104116 / JCM 14847 / LMG 12228 / 1C / PRS 101 / PAO1).